A 545-amino-acid polypeptide reads, in one-letter code: CTP synthase (545 aa).

The segment at 1-265 (MNGIKHIFIT…DKFVIKHLDL (265 aa)) is amidoligase domain. S15 is a binding site for CTP. S15 lines the UTP pocket. ATP is bound by residues 16–21 (SIGKGL) and D73. Mg(2+)-binding residues include D73 and E141. CTP-binding positions include 148 to 150 (DIE), 188 to 193 (KTKPTQ), and K224. Residues 188–193 (KTKPTQ) and K224 each bind UTP. One can recognise a Glutamine amidotransferase type-1 domain in the interval 290–534 (EIAIIGKYTG…VAAALARKEI (245 aa)). G349 is a binding site for L-glutamine. C376 serves as the catalytic Nucleophile; for glutamine hydrolysis. Residues 377–380 (LGMQ), E400, and R460 each bind L-glutamine. Active-site residues include H507 and E509.

This sequence belongs to the CTP synthase family. Homotetramer.

It carries out the reaction UTP + L-glutamine + ATP + H2O = CTP + L-glutamate + ADP + phosphate + 2 H(+). The enzyme catalyses L-glutamine + H2O = L-glutamate + NH4(+). The catalysed reaction is UTP + NH4(+) + ATP = CTP + ADP + phosphate + 2 H(+). The protein operates within pyrimidine metabolism; CTP biosynthesis via de novo pathway; CTP from UDP: step 2/2. Allosterically activated by GTP, when glutamine is the substrate; GTP has no effect on the reaction when ammonia is the substrate. The allosteric effector GTP functions by stabilizing the protein conformation that binds the tetrahedral intermediate(s) formed during glutamine hydrolysis. Inhibited by the product CTP, via allosteric rather than competitive inhibition. Its function is as follows. Catalyzes the ATP-dependent amination of UTP to CTP with either L-glutamine or ammonia as the source of nitrogen. Regulates intracellular CTP levels through interactions with the four ribonucleotide triphosphates. The polypeptide is CTP synthase (Tropheryma whipplei (strain TW08/27) (Whipple's bacillus)).